The sequence spans 227 residues: PKHD-type hydroxylase GOX0559 (227 aa).

Residues R78–S178 form the Fe2OG dioxygenase domain. Fe cation is bound by residues H96, D98, and H159. R169 is a binding site for 2-oxoglutarate.

It depends on Fe(2+) as a cofactor. Requires L-ascorbate as cofactor.

This chain is PKHD-type hydroxylase GOX0559, found in Gluconobacter oxydans (strain 621H) (Gluconobacter suboxydans).